The sequence spans 772 residues: uncharacterized protein (772 aa).

The next 2 membrane-spanning stretches (helical) occupy residues 16-36 (LITFFCLLSTIPVILVGLFSY) and 301-321 (IGWITFAVCLILLTLSLLFSW). The HTH araC/xylS-type domain maps to 670–768 (DNIIHIIHHE…GITPGNYRQQ (99 aa)). 2 consecutive DNA-binding regions (H-T-H motif) follow at residues 687–708 (DEIARRLHYNPNYLSSIFKKEM) and 735–758 (VKDIAEKLKYKNSQNFIRSFKKLE).

The protein localises to the cell membrane. This is an uncharacterized protein from Bacillus subtilis (strain 168).